A 356-amino-acid chain; its full sequence is Phosphoribosyl pyrophosphate synthase-associated protein 1 (356 aa).

M1 carries the post-translational modification N-acetylmethionine. An N-acetylproline modification is found at N2. Residues S177 and S215 each carry the phosphoserine modification.

Belongs to the ribose-phosphate pyrophosphokinase family. Binds to PRPS1 and PRPS2. As to expression, ubiquitous.

Functionally, seems to play a negative regulatory role in 5-phosphoribose 1-diphosphate synthesis. This Homo sapiens (Human) protein is Phosphoribosyl pyrophosphate synthase-associated protein 1 (PRPSAP1).